A 1547-amino-acid polypeptide reads, in one-letter code: ABC multidrug transporter atrF (1547 aa).

2 disordered regions span residues 1-66 (MADG…RRGA) and 85-123 (TRSV…IDGD). Residues 10–19 (SATSTTMETN) are compositionally biased toward polar residues. The segment covering 36–47 (SSSMTATSSELS) has biased composition (low complexity). Over residues 51–66 (RWGERDQGEPVSRRGA) the composition is skewed to basic and acidic residues. Residues 111–123 (KAIDEEDSTIDGD) show a composition bias toward acidic residues. The ABC transporter 1 domain maps to 197 to 439 (IPQLRFGKQP…FVNLGFHCPE (243 aa)). 2 N-linked (GlcNAc...) asparagine glycosylation sites follow: Asn299 and Asn363. The next 7 helical transmembrane spans lie at 552 to 572 (LYTK…LFYG), 586 to 606 (ALFF…MPAV), 635 to 655 (FPAI…MTGL), 657 to 677 (VTAS…FSIT), 698 to 718 (GIAL…QGLI), 722 to 742 (IWFG…AVLT), and 804 to 824 (FGVV…AAEF). The ABC transporter 2 domain maps to 892-1130 (FTWSNVEYTV…DVIKYFADRG (239 aa)). N-linked (GlcNAc...) asparagine glycosylation is present at Asn905. 928-935 (GASGAGKT) is an ATP binding site. N-linked (GlcNAc...) asparagine glycans are attached at residues Asn980 and Asn999. The next 8 membrane-spanning stretches (helical) occupy residues 1230–1250 (FVSV…GNSI), 1260–1280 (IFLI…KFYI), 1309–1329 (IPMA…PVGF), 1334–1354 (STAG…SSWG), 1356–1376 (WICA…FFFV), 1397–1417 (YWMY…SSIF), 1491–1511 (CFGI…FFIY), and 1520–1540 (FGMG…KGVF).

The protein belongs to the ABC transporter superfamily. ABCG family. PDR (TC 3.A.1.205) subfamily.

Its subcellular location is the cell membrane. It carries out the reaction voriconazole(in) + ATP + H2O = voriconazole(out) + ADP + phosphate + H(+). The catalysed reaction is fluconazole(in) + ATP + H2O = fluconazole(out) + ADP + phosphate + H(+). Functionally, pleiotropic ABC efflux transporter involved in the basal level of azole susceptibility. Confers resistance to fluconazole and voriconazole. The protein is ABC multidrug transporter atrF of Aspergillus fumigatus (strain ATCC MYA-4609 / CBS 101355 / FGSC A1100 / Af293) (Neosartorya fumigata).